The following is a 1136-amino-acid chain: 3-O-alpha-D-galactosyl-alpha-L-arabinofuranosidase (1136 aa).

Residues 1–36 (MGISRNRLVPGLVGLAASAAIVLPLGIGMPVSSATA) form the signal peptide. Residue Glu-194 is the Proton donor of the active site. The Nucleophile role is filled by Glu-321. CBM6 domains lie at 521–656 (QAIE…LLLY) and 669–779 (VTYP…VTTA). In terms of domain architecture, BIG2 spans 987 to 1045 (KASLKVGETLSLNASVTPDSVADKTVQWTSSDEQVATVDEHGVVKGVKAGTVTITATSV). Residues 1049 to 1104 (SRSGSVEVTVAEDSEQKPSGGDGDNNGEQTGKPDGNTGGQTSDSDAGADSGNNQKH) are disordered. The segment covering 1087–1103 (GQTSDSDAGADSGNNQK) has biased composition (polar residues). A helical membrane pass occupies residues 1109-1129 (GAAVAAVAGVAVLLAGAGLLL).

The protein belongs to the glycosyl hydrolase 39 family.

Its subcellular location is the cell membrane. The protein localises to the secreted. It localises to the cell wall. The catalysed reaction is Hydrolysis of alpha-D-Galp-(1-&gt;3)-L-Araf disaccharides from non-reducing terminals in branches of type II arabinogalactan attached to proteins.. Functionally, hydrolase involved in the degradation of the gum arabic arabinogalactan protein (AGP). Catalyzes the release of 3-O-alpha-D-galactopyranosyl-L-arabinose (alpha-D-Galp-(1-&gt;3)-L-Ara) from gum arabic AGP. Can also release 3-O-beta-L-arabinopyranosyl-L-arabinose (beta-L-Arap-(1-&gt;3)-L-Ara) from gum arabic AGP and larch AGP, but the alpha-D-Galp-(1-&gt;3)-L-Ara release activity is 594-fold higher than the beta-L-Arap-(1-&gt;3)-L-Ara release activity. Exhibits no reactivity toward p-nitrophenyl (pNP)-alpha-Araf or any other tested pNP substrate. Plays a crucial role in gum arabic AGP assimilation in B.longum. The protein is 3-O-alpha-D-galactosyl-alpha-L-arabinofuranosidase of Bifidobacterium longum subsp. longum.